We begin with the raw amino-acid sequence, 111 residues long: X antigen family member 3 (111 aa).

Positions 1–111 (MIWRGRSTYR…PEGGDRQPQV (111 aa)) are disordered. The segment covering 29-40 (PGDEEPQQEEPP) has biased composition (acidic residues). Positions 97–111 (EQFKMPEGGDRQPQV) are enriched in basic and acidic residues.

This sequence belongs to the GAGE family.

In Homo sapiens (Human), this protein is X antigen family member 3 (XAGE3).